The chain runs to 232 residues: Probable anion ABC transporter permease protein HVO_1887 (232 aa).

The ABC transmembrane type-1 domain occupies 16-217 (TAVSLYVSTA…ALVLGVNALG (202 aa)). 5 helical membrane passes run 23–43 (STAA…AVGF), 55–75 (VIST…LLVL), 93–113 (MILS…LSAV), 146–166 (IVTA…SVLI), and 198–218 (TGIA…ALGA).

Belongs to the binding-protein-dependent transport system permease family. As to quaternary structure, the complex is composed of two ATP-binding proteins (HVO_1886), two transmembrane proteins (HVO_1887) and a solute-binding protein (HVO_1888).

Its subcellular location is the cell membrane. Its function is as follows. Part of an ABC transporter complex involved in anions import. Responsible for the translocation of the substrate across the membrane. The sequence is that of Probable anion ABC transporter permease protein HVO_1887 from Haloferax volcanii (strain ATCC 29605 / DSM 3757 / JCM 8879 / NBRC 14742 / NCIMB 2012 / VKM B-1768 / DS2) (Halobacterium volcanii).